The chain runs to 431 residues: Protein translocase subunit SecY (431 aa).

Over 1-17 (MFKTISNFMRVSDIRNK) the chain is Cytoplasmic. Residues 18–38 (IIFTLLMLIVFRIGAFIPVPY) traverse the membrane as a helical segment. Topologically, residues 39-66 (VNAEALQAQSQMGVFDLLNTFGGGALYQ) are extracellular. A helical membrane pass occupies residues 67-87 (FSIFAMGITPYITASIIIQLL). The Cytoplasmic portion of the chain corresponds to 88 to 115 (QMDVVPKFTEWSKQGEVGRRKLAQFTRY). A helical transmembrane segment spans residues 116–136 (FTIVLGFIQALGMSYGFNNLA). At 137–145 (NGMLIEKSG) the chain is on the extracellular side. Residues 146–166 (VSTYLIIALVLTGGTAFLMWL) traverse the membrane as a helical segment. Topologically, residues 167–177 (GEQITSHGVGN) are cytoplasmic. Residues 178–198 (GISIIIFAGIVSSIPKTIGQI) form a helical membrane-spanning segment. Topologically, residues 199–213 (YETQFVGSNDQLFIH) are extracellular. The chain crosses the membrane as a helical span at residues 214–234 (IVKVALLVIAILAVIVGVIFI). Residues 235–261 (QQAVRKIAIQYAKGTGRSPAGGGQSTH) lie on the Cytoplasmic side of the membrane. A helical membrane pass occupies residues 262–282 (LPLKVNPAGVIPVIFAVAFLI). Residues 283-308 (TPRTIASFFGTNDVTKWIQNNFDNTH) lie on the Extracellular side of the membrane. Residues 309 to 329 (PVGMAIYVALIIAFTYFYAFV) form a helical membrane-spanning segment. Over 330 to 368 (QVNPEQMADNLKKQGGYIPGVRPGKMTQDRITSILYRLT) the chain is Cytoplasmic. Transmembrane regions (helical) follow at residues 369–389 (FVGS…IQFA) and 390–410 (GLPQ…GVAL). Residues 411–431 (ETMKQLESQLVKRNYRGFMKN) are Cytoplasmic-facing.

Belongs to the SecY/SEC61-alpha family. As to quaternary structure, component of the Sec protein translocase complex. Heterotrimer consisting of SecY, SecE and SecG subunits. The heterotrimers can form oligomers, although 1 heterotrimer is thought to be able to translocate proteins. Interacts with the ribosome. Interacts with SecDF, and other proteins may be involved. Interacts with SecA. Interacts with FloT.

It is found in the cell membrane. The protein localises to the membrane raft. In terms of biological role, the central subunit of the protein translocation channel SecYEG. Consists of two halves formed by TMs 1-5 and 6-10. These two domains form a lateral gate at the front which open onto the bilayer between TMs 2 and 7, and are clamped together by SecE at the back. The channel is closed by both a pore ring composed of hydrophobic SecY resides and a short helix (helix 2A) on the extracellular side of the membrane which forms a plug. The plug probably moves laterally to allow the channel to open. The ring and the pore may move independently. This Bacillus subtilis (strain 168) protein is Protein translocase subunit SecY.